The sequence spans 336 residues: Dihydroorotate dehydrogenase (quinone) (336 aa).

FMN-binding positions include 62 to 66 and Thr-86; that span reads AGLDK. Lys-66 lines the substrate pocket. 111-115 provides a ligand contact to substrate; sequence NRMGF. FMN contacts are provided by Asn-139 and Asn-172. Asn-172 is a binding site for substrate. The active-site Nucleophile is Ser-175. A substrate-binding site is contributed by Asn-177. FMN contacts are provided by Lys-217 and Thr-245. 246–247 lines the substrate pocket; sequence NT. FMN-binding positions include Gly-268, Gly-297, and 318–319; that span reads YS.

Belongs to the dihydroorotate dehydrogenase family. Type 2 subfamily. Monomer. FMN serves as cofactor.

It is found in the cell membrane. The enzyme catalyses (S)-dihydroorotate + a quinone = orotate + a quinol. The protein operates within pyrimidine metabolism; UMP biosynthesis via de novo pathway; orotate from (S)-dihydroorotate (quinone route): step 1/1. Its function is as follows. Catalyzes the conversion of dihydroorotate to orotate with quinone as electron acceptor. This is Dihydroorotate dehydrogenase (quinone) from Salmonella gallinarum (strain 287/91 / NCTC 13346).